The chain runs to 128 residues: Protein SOB FIVE-LIKE 3 (128 aa).

Disordered stretches follow at residues 1-26 (MERE…EEEE) and 54-128 (KDSD…HKKK). Polar residues predominate over residues 8–18 (SSESGWTTYIS). The SOFL-A motif lies at 11–16 (SGWTTY). An SOFL-B motif is present at residues 59 to 68 (SMASDASSGP). Over residues 80–104 (REGLALRNGKGESNDVYSHRIDDKN) the composition is skewed to basic and acidic residues. The Nuclear localization signal signature appears at 111–118 (RKKEKKKS).

Belongs to the SOFL plant protein family. Expressed in seedlings, roots, flowers and siliques.

It localises to the cytoplasm. Its subcellular location is the nucleus. Involved in cytokinin-mediated development. This chain is Protein SOB FIVE-LIKE 3, found in Arabidopsis thaliana (Mouse-ear cress).